A 652-amino-acid polypeptide reads, in one-letter code: Nucleolar GTP-binding protein 1 (652 aa).

Residues 169–341 (RTIIICGFPN…VKTEACERLL (173 aa)) enclose the OBG-type G domain. Residues 175-182 (GFPNVGKS), 221-225 (DTPGI), and 289-292 (NKID) contribute to the GTP site. The tract at residues 501 to 521 (RLSSRKNKPVIPRNKQPKVRD) is disordered.

It belongs to the TRAFAC class OBG-HflX-like GTPase superfamily. OBG GTPase family. NOG subfamily.

It is found in the nucleus. The protein localises to the nucleolus. Its function is as follows. Involved in the biogenesis of the 60S ribosomal subunit. Required for normal assembly of the mitotic spindle. May be involved in both centrosome-dependent and centrosome-independent spindle assembly programs. Acts as a TP53 repressor, preventing TP53 stabilization and cell cycle arrest. In Drosophila melanogaster (Fruit fly), this protein is Nucleolar GTP-binding protein 1.